A 295-amino-acid chain; its full sequence is MKIQTDAANVLQRASAQLKSGLLKEKPLWYDIIAKYPPTSTNDLIKKSHVYEGKSDPRNNSIIYKYPNSNNKNNNVLFKTRPSNKELKSKNHNIHKLPKLKFIEDSLRKIFYQQHPWELSRPKNLIDNGNGNNNEKCDWSHMLQLHKPLDGESVVQRTLWLLKNNTTKGLTMVEAYDKARFEFYKLRMSEEMESHVAKEESTMYGSVFTSTTVNWNLSKEQEYINDWTIIAKERTQVIEANMNKSSAPIGSVVEEEKSQSSLFEDLLSNDNLQSEPEVEQSGQQQQQEQPKQETN.

The segment at 249–295 is disordered; it reads IGSVVEEEKSQSSLFEDLLSNDNLQSEPEVEQSGQQQQQEQPKQETN. Residues 273-289 are compositionally biased toward low complexity; the sequence is QSEPEVEQSGQQQQQEQ.

The protein belongs to the mitochondrion-specific ribosomal protein mS23 family. In terms of assembly, component of the mitochondrial small ribosomal subunit (mt-SSU).

The protein resides in the mitochondrion. In terms of biological role, component of the mitochondrial ribosome (mitoribosome), a dedicated translation machinery responsible for the synthesis of mitochondrial genome-encoded proteins, including at least some of the essential transmembrane subunits of the mitochondrial respiratory chain. The mitoribosomes are attached to the mitochondrial inner membrane and translation products are cotranslationally integrated into the membrane. The polypeptide is Small ribosomal subunit protein mS23 (RSM25) (Candida albicans (strain SC5314 / ATCC MYA-2876) (Yeast)).